We begin with the raw amino-acid sequence, 406 residues long: Imidazolonepropionase (406 aa).

His72 and His74 together coordinate Fe(3+). Residues His72 and His74 each contribute to the Zn(2+) site. The 4-imidazolone-5-propanoate site is built by Arg81, Tyr144, and His177. Tyr144 provides a ligand contact to N-formimidoyl-L-glutamate. Position 242 (His242) interacts with Fe(3+). Position 242 (His242) interacts with Zn(2+). Gln245 contacts 4-imidazolone-5-propanoate. Fe(3+) is bound at residue Asp317. Residue Asp317 participates in Zn(2+) binding. Residues Asn319 and Gly321 each contribute to the N-formimidoyl-L-glutamate site. Thr322 lines the 4-imidazolone-5-propanoate pocket.

It belongs to the metallo-dependent hydrolases superfamily. HutI family. It depends on Zn(2+) as a cofactor. Fe(3+) serves as cofactor.

It localises to the cytoplasm. It carries out the reaction 4-imidazolone-5-propanoate + H2O = N-formimidoyl-L-glutamate. It participates in amino-acid degradation; L-histidine degradation into L-glutamate; N-formimidoyl-L-glutamate from L-histidine: step 3/3. Its function is as follows. Catalyzes the hydrolytic cleavage of the carbon-nitrogen bond in imidazolone-5-propanoate to yield N-formimidoyl-L-glutamate. It is the third step in the universal histidine degradation pathway. The protein is Imidazolonepropionase of Yersinia pseudotuberculosis serotype O:3 (strain YPIII).